The chain runs to 1024 residues: Protein tiptop (1024 aa).

The segment covering 20–35 (ELTSPRCQSRDSNTSA) has biased composition (polar residues). Disordered stretches follow at residues 20–40 (ELTS…AGAG) and 138–215 (EGEV…ISAD). Over residues 159-175 (DDQEEDQEQDQEQEQEQ) the composition is skewed to acidic residues. A C2H2-type 1 zinc finger spans residues 317-341 (FKCVWCKQSFSTLANLTAHMKETQH). The segment at 350 to 392 (LPTGGVGTPSAPPPTRLATSASNSACSSSSSSTSSSSNSSKSE) is disordered. Positions 368-391 (TSASNSACSSSSSSTSSSSNSSKS) are enriched in low complexity. A C2H2-type 2 zinc finger spans residues 426–450 (LKCMWCGQSFRSLAEMTSHMQETQH). Disordered stretches follow at residues 466 to 489 (GDER…SSPS), 519 to 576 (AQKS…SLDS), 712 to 759 (SRDR…IKAE), 786 to 818 (FSME…SLLA), and 868 to 891 (ETTD…ASAT). Low complexity predominate over residues 477–489 (VPSTSTAAPSSPS). Residues 499 to 523 (LTCKVCDQAFGSLKELSTHMAQKSH) form a C2H2-type 3 zinc finger. Residues 527 to 537 (SPAPSASPPAA) are compositionally biased toward low complexity. Residues 543 to 558 (KRGRQNRNEKRKKSLP) show a composition bias toward basic residues. Low complexity predominate over residues 718–729 (SESSSASRVESS). Residues 745-755 (TPAPPPPPPPT) show a composition bias toward pro residues. Basic and acidic residues predominate over residues 786-795 (FSMEACRESP). Over residues 796–808 (RSVSKSPAPQTER) the composition is skewed to polar residues. The segment covering 874–891 (STGLRSASSAGSSTASAT) has biased composition (low complexity). The segment at 926 to 949 (IKCSYCDTPFASKGAYRHHLSKVH) adopts a C2H2-type 4 zinc-finger fold. Positions 954–1004 (AGEDSPRLKSPAVQSPRSMPLASPRRSASRSPATGSQQPPPSPTISPYDES) are disordered. Residues 968–990 (SPRSMPLASPRRSASRSPATGSQ) show a composition bias toward low complexity.

Belongs to the teashirt C2H2-type zinc-finger protein family. In terms of tissue distribution, expression in the Malpighian tubules (MTs) and stomatogastric nervous system starts at embryonic stage 10. At stage 11, expression in the head domain is initiated in the clypeolabrum in two bilaterally symmetric clusters of cells. At stage 12, expression appears in the central nervous system (CNS) of the trunk and the epidermis. The staining in the hindgut is maintained throughout embryogenesis. At stage 13, expression is present in elongating MTs. The anterior staining is detected in cells that invaginate into the stomodeum and by stage 15 onwards, in cells close to the pharynx. Also expressed in cells of the brain, the second constriction of the gut, the trunk epidermis, the anterior segments of the CNS (the three thoracic and the first two abdominal segments) and in the MTs. From stage 12 onwards, tsh and tio are colocalized in some cells.

The protein localises to the nucleus. In terms of biological role, tiptop (tio) and teashirt (tsh) have, on the whole, common activities. Tio and tsh repress each other's expression and tsh has a crucial role for trunk patterning that is in part masked by ectopic expression of tiptop. Both genes share a common activity required for the activation of Ser and svb and the maintenance of en and wg. The protein is Protein tiptop (tio) of Drosophila melanogaster (Fruit fly).